Consider the following 207-residue polypeptide: Small ribosomal subunit protein uS4 (207 aa).

Residues 33 to 54 (KLDSKPGQHGRTSGARTSDYGN) form a disordered region. The span at 42–53 (GRTSGARTSDYG) shows a compositional bias: polar residues. An S4 RNA-binding domain is found at 97–157 (SRLDNVVYRM…EKSKKQVRIA (61 aa)).

This sequence belongs to the universal ribosomal protein uS4 family. Part of the 30S ribosomal subunit. Contacts protein S5. The interaction surface between S4 and S5 is involved in control of translational fidelity.

In terms of biological role, one of the primary rRNA binding proteins, it binds directly to 16S rRNA where it nucleates assembly of the body of the 30S subunit. With S5 and S12 plays an important role in translational accuracy. The protein is Small ribosomal subunit protein uS4 of Ralstonia pickettii (strain 12J).